The following is a 181-amino-acid chain: Major urinary protein 11 (181 aa).

An N-terminal signal peptide occupies residues 1–19 (MKMLLLLLCLGLTLVCVHA). Residues C83 and C176 are joined by a disulfide bond.

The protein belongs to the calycin superfamily. Lipocalin family.

The protein resides in the secreted. Functionally, major urinary proteins (Mups) bind pheromones, and thus stabilize them to allow slow release into the air from urine marks. May protect pheromones from oxidation. May also act as pheromones themselves. In this context, they play a role in the regulation of social behaviors, such as aggression, mating, pup-suckling, territory establishment and dominance. Binds the pheromone analog 2-sec-butyl-4,5-dihydrothiazole (SBT) in vitro. This Mus musculus (Mouse) protein is Major urinary protein 11.